The chain runs to 721 residues: Dolichyl-diphosphooligosaccharide--protein glycosyltransferase subunit STT3B (721 aa).

Residues 1–25 lie on the Cytoplasmic side of the membrane; the sequence is MAAATALDSLPAPLRSLRLKTKQQE. A helical membrane pass occupies residues 26-46; it reads LLLRVSALALIYVLAFVVRLF. At 47 to 129 the chain is on the lumenal side; the sequence is SVLRYESMIH…VHIREVCVLT (83 aa). The DXD motif 1 signature appears at 57–59; the sequence is EFD. D59 is a binding site for Mn(2+). The chain crosses the membrane as a helical span at residues 130–148; that stretch reads APFFAANTTLVAYAFGREI. Residues 149–150 are Cytoplasmic-facing; that stretch reads WD. The chain crosses the membrane as a helical span at residues 151-168; the sequence is SGAGLVAAALIAVCPGYI. Topologically, residues 169–179 are lumenal; it reads SRSVAGSYDNE. Mn(2+) contacts are provided by D177 and E179. Positions 177 to 179 match the DXD motif 2 motif; that stretch reads DNE. A helical membrane pass occupies residues 180–199; it reads GVAIFALLLTFYLFVRAVNT. The Cytoplasmic segment spans residues 200 to 201; it reads GS. Residues 202–216 form a helical membrane-spanning segment; that stretch reads LAWSLASAFGYFYMV. Topologically, residues 217–221 are lumenal; the sequence is SAWGG. Residues 222–238 form a helical membrane-spanning segment; it reads YVFIINLLPLYVLVLLV. Residues 239 to 243 lie on the Cytoplasmic side of the membrane; that stretch reads TGRYS. The helical transmembrane segment at 244-269 threads the bilayer; it reads QRLYVAYNSTYVLGMLLAMQIRFVGF. At 270–277 the chain is on the lumenal side; that stretch reads QHVQSGEH. Residues 278-297 form a helical membrane-spanning segment; it reads MAAMGVFFLLQVFFFLDWVK. Topologically, residues 298–313 are cytoplasmic; sequence YLLNDAKLFKSFLRIT. Residues 314–334 form a helical membrane-spanning segment; the sequence is LTCVITVGTLALGIGTASGYI. The Lumenal portion of the chain corresponds to 335 to 367; that stretch reads SPWTGRFYSLLDPTYAKDHIPIIASVSEHQPTA. The SVSE motif signature appears at 359–362; it reads SVSE. Residues 368 to 390 form a helical membrane-spanning segment; it reads WSSFMFDFHILLFLFPAGLYFCF. The Cytoplasmic portion of the chain corresponds to 391 to 396; it reads KRLSDA. The chain crosses the membrane as a helical span at residues 397–413; that stretch reads TIFIVMYGLTSMYFAGV. The Lumenal segment spans residues 414-417; that stretch reads MVRL. Residue R416 participates in dolichyl diphosphooligosaccharide binding. A helical transmembrane segment spans residues 418-439; it reads ILVAAPAVCLISAIAASATIKN. Topologically, residues 440 to 471 are cytoplasmic; the sequence is LTTLIRTKSKSPQTVSGKSSGSKAAAKGAVDQ. A helical membrane pass occupies residues 472–492; that stretch reads SLPFQQNVAIALLLGAFYLLS. Residues 493 to 721 lie on the Lumenal side of the membrane; that stretch reads RYAVHCTWVT…YKVKPPKNRS (229 aa). The segment at 548–550 is interacts with target acceptor peptide in protein substrate; it reads WWD. The short motif at 548–552 is the WWDYG motif element; sequence WWDYG. Position 553 (Y553) interacts with dolichyl diphosphooligosaccharide. Residues N560 and N567 are each glycosylated (N-linked (GlcNAc...) asparagine). Residue N571 is glycosylated (N-linked (GlcNAc...) (high mannose) asparagine). Residues 615–622 carry the DK motif motif; the sequence is DINKFLWM.

This sequence belongs to the STT3 family. Component of the oligosaccharyltransferase (OST) complex. The cofactor is Mg(2+). Mn(2+) serves as cofactor.

It localises to the endoplasmic reticulum membrane. The enzyme catalyses a di-trans,poly-cis-dolichyl diphosphooligosaccharide + L-asparaginyl-[protein] = N(4)-(oligosaccharide-(1-&gt;4)-N-acetyl-beta-D-glucosaminyl-(1-&gt;4)-N-acetyl-beta-D-glucosaminyl)-L-asparaginyl-[protein] + a di-trans,poly-cis-dolichyl diphosphate + H(+). It functions in the pathway protein modification; protein glycosylation. In terms of biological role, catalytic subunit of the oligosaccharyl transferase (OST) complex that catalyzes the initial transfer of a defined glycan (Glc(3)Man(9)GlcNAc(2) in eukaryotes) from the lipid carrier dolichol-pyrophosphate to an asparagine residue within an Asn-X-Ser/Thr consensus motif in nascent polypeptide chains, the first step in protein N-glycosylation. N-glycosylation occurs cotranslationally and the complex associates with the Sec61 complex at the channel-forming translocon complex that mediates protein translocation across the endoplasmic reticulum (ER). All subunits are required for a maximal enzyme activity. This subunit contains the active site and the acceptor peptide and donor lipid-linked oligosaccharide (LLO) binding pockets. This Oryza sativa subsp. japonica (Rice) protein is Dolichyl-diphosphooligosaccharide--protein glycosyltransferase subunit STT3B (STT3B).